The chain runs to 402 residues: ORC1-type DNA replication protein 17 (402 aa).

Tyr-223 and Arg-235 together coordinate ATP.

The protein belongs to the CDC6/cdc18 family.

Its function is as follows. Involved in regulation of DNA replication. This Haloarcula marismortui (strain ATCC 43049 / DSM 3752 / JCM 8966 / VKM B-1809) (Halobacterium marismortui) protein is ORC1-type DNA replication protein 17 (cdc6q).